Reading from the N-terminus, the 477-residue chain is Ribulose bisphosphate carboxylase large chain (477 aa).

Residues 1–2 (MS) constitute a propeptide that is removed on maturation. Proline 3 carries the post-translational modification N-acetylproline. N6,N6,N6-trimethyllysine is present on lysine 14. Positions 123 and 173 each coordinate substrate. Residue lysine 175 is the Proton acceptor of the active site. Position 177 (lysine 177) interacts with substrate. 3 residues coordinate Mg(2+): lysine 201, aspartate 203, and glutamate 204. Lysine 201 is subject to N6-carboxylysine. Histidine 294 functions as the Proton acceptor in the catalytic mechanism. Residues arginine 295, histidine 327, and serine 379 each contribute to the substrate site.

The protein belongs to the RuBisCO large chain family. Type I subfamily. As to quaternary structure, heterohexadecamer of 8 large chains and 8 small chains; disulfide-linked. The disulfide link is formed within the large subunit homodimers. Mg(2+) is required as a cofactor. Post-translationally, the disulfide bond which can form in the large chain dimeric partners within the hexadecamer appears to be associated with oxidative stress and protein turnover.

Its subcellular location is the plastid. It localises to the chloroplast. The catalysed reaction is 2 (2R)-3-phosphoglycerate + 2 H(+) = D-ribulose 1,5-bisphosphate + CO2 + H2O. It carries out the reaction D-ribulose 1,5-bisphosphate + O2 = 2-phosphoglycolate + (2R)-3-phosphoglycerate + 2 H(+). Its function is as follows. RuBisCO catalyzes two reactions: the carboxylation of D-ribulose 1,5-bisphosphate, the primary event in carbon dioxide fixation, as well as the oxidative fragmentation of the pentose substrate in the photorespiration process. Both reactions occur simultaneously and in competition at the same active site. The polypeptide is Ribulose bisphosphate carboxylase large chain (Cichorium intybus (Chicory)).